A 528-amino-acid polypeptide reads, in one-letter code: CTD kinase subunit alpha (528 aa).

Positions 1–15 (MSYNNGNTYSKSYSR) are enriched in polar residues. The interval 1–148 (MSYNNGNTYS…NTSNDIKNGY (148 aa)) is disordered. A Phosphoserine; by autocatalysis modification is found at S14. The Nuclear localization signal signature appears at 37–44 (PPKRIRTD). The span at 45–103 (SGYQSNMDNISSHRVNSNDQPGHTKSRGNNNLSRYNDTSFQTSSRYQGSRYNNNNTSYE) shows a compositional bias: polar residues. Residues 104-118 (NRPKSIKRDETKAEF) are compositionally biased toward basic and acidic residues. Residues 134–144 (YNNSSNTSNDI) show a composition bias toward polar residues. Positions 183 to 469 (YLRIMQVGEG…ATEALQSDYF (287 aa)) constitute a Protein kinase domain. Residues 189–197 (VGEGTYGKV) and K212 contribute to the ATP site. D306 serves as the catalytic Proton acceptor. The residue at position 338 (T338) is a Phosphothreonine. The tract at residues 497 to 528 (QKRPNILSTNTNNKGNGNSNNNNNNNNDDDDK) is disordered. A compositionally biased stretch (low complexity) spans 504 to 522 (STNTNNKGNGNSNNNNNNN).

This sequence belongs to the protein kinase superfamily. CMGC Ser/Thr protein kinase family. CDC2/CDKX subfamily. As to quaternary structure, CTDK-I consists of three subunits, CTK1, CTK2 and CTK3 (also called alpha, beta and gamma). Interacts directly with the CTK2 and CTK3 subunits, this interaction is required for kinase activity. Interacts with RNA polymerase I. Interacts with SNF1, but only at low glucose concentrations. Interacts with translating ribosomes. Post-translationally, phosphorylated on Thr-338 by CAK1. Phosphorylation is essential for the elevated CTD Ser-2 phosphorylation and required to activate transcription of stationary-phase genes during the diauxic shift.

The protein localises to the nucleus. The protein resides in the nucleolus. Its subcellular location is the cytoplasm. The enzyme catalyses [DNA-directed RNA polymerase] + ATP = phospho-[DNA-directed RNA polymerase] + ADP + H(+). In terms of biological role, catalytic subunit of the CTDK-I complex, which hyperphosphorylates the C-terminal heptapeptide repeat domain (CTD) of the largest RNA polymerase II subunit. CTDK-I phosphorylates 'Ser-5' if the CTD substrate is not phosphorylated at 'Ser-5', but will phosphorylate 'Ser-2' of a CTD substrate if 'Ser-5' is already phosphorylated. CTDK-I is also more reactive toward substrates that are prephosphorylated at 'Ser-2' or 'Ser-5' compared with an unphosphorylated CTD substrate, therefore efficiently creating doubly phosphorylated CTD repeats. Involved in RNA polymerase II transcriptional elongation, and through PTI1, pre-mRNA 3'-end processing. Participates in both positive and negative regulation of CTD phosphorylation. Required for DNA damage induced transcription, including the expression of the RNR genes, and reprogramming of gene expression upon amino acid starvation. Required for SET2 mediated H3K36 methylation. Also regulates H3K4 methylation. Controls the maintenance of suppressive chromatin in the coding regions of genes by both promoting H3K36 methylation, which leads to histone deacetylation, and catalyzing phosphorylation of the CTD required to localize H3K4 chromatin modification specifically to the 5' ends of genes, thereby creating a boundary for H3K4 methylation that prevents a mark associated with transcriptional initiation from spreading into the bodies of genes. Involved in RNA polymerase I transcription. Involved in telomere maintenance. Acts together with SNF1 to induce GSY2 transcription in response to glucose limitation. Involved in the adaptation to alternative carbon sources, including galactose, glycerol and ethanol, but not raffinose. Required for the integrity of the rDNA locus. Functions in translation elongation by enhancing decoding fidelity. Needed for translational accuracy by phosphorylating RPS2. The polypeptide is CTD kinase subunit alpha (CTK1) (Saccharomyces cerevisiae (strain ATCC 204508 / S288c) (Baker's yeast)).